The chain runs to 127 residues: Large ribosomal subunit protein uL18 (127 aa).

The protein belongs to the universal ribosomal protein uL18 family. In terms of assembly, part of the 50S ribosomal subunit; part of the 5S rRNA/L5/L18/L25 subcomplex. Contacts the 5S and 23S rRNAs.

Its function is as follows. This is one of the proteins that bind and probably mediate the attachment of the 5S RNA into the large ribosomal subunit, where it forms part of the central protuberance. The chain is Large ribosomal subunit protein uL18 from Streptomyces avermitilis (strain ATCC 31267 / DSM 46492 / JCM 5070 / NBRC 14893 / NCIMB 12804 / NRRL 8165 / MA-4680).